A 695-amino-acid chain; its full sequence is Biosynthetic arginine decarboxylase 1 (695 aa).

Lys141 is subject to N6-(pyridoxal phosphate)lysine. Residue Leu332–Tyr342 participates in substrate binding.

It belongs to the Orn/Lys/Arg decarboxylase class-II family. SpeA subfamily. The cofactor is Mg(2+). Requires pyridoxal 5'-phosphate as cofactor.

It carries out the reaction L-arginine + H(+) = agmatine + CO2. Catalyzes the biosynthesis of agmatine from arginine. In Synechocystis sp. (strain ATCC 27184 / PCC 6803 / Kazusa), this protein is Biosynthetic arginine decarboxylase 1 (speA1).